Here is a 181-residue protein sequence, read N- to C-terminus: UPF0398 protein lin2003 (181 aa).

Belongs to the UPF0398 family.

The protein is UPF0398 protein lin2003 of Listeria innocua serovar 6a (strain ATCC BAA-680 / CLIP 11262).